Consider the following 66-residue polypeptide: Large ribosomal subunit protein bL33c (66 aa).

Belongs to the bacterial ribosomal protein bL33 family.

The protein localises to the plastid. The protein is Large ribosomal subunit protein bL33c of Cuscuta gronovii (Common dodder).